Here is a 516-residue protein sequence, read N- to C-terminus: Signal recognition particle protein (516 aa).

GTP contacts are provided by residues 108–115 (GLQGAGKT), 191–195 (DTAGR), and 249–252 (TKID). Positions 383 to 405 (MTPEERENPDLLTPSRRRRIASG) are disordered.

The protein belongs to the GTP-binding SRP family. SRP54 subfamily. As to quaternary structure, part of the signal recognition particle protein translocation system, which is composed of SRP and FtsY.

It is found in the cytoplasm. The enzyme catalyses GTP + H2O = GDP + phosphate + H(+). In terms of biological role, involved in targeting and insertion of nascent membrane proteins into the cytoplasmic membrane. Binds to the hydrophobic signal sequence of the ribosome-nascent chain (RNC) as it emerges from the ribosomes. The SRP-RNC complex is then targeted to the cytoplasmic membrane where it interacts with the SRP receptor FtsY. The protein is Signal recognition particle protein of Streptococcus mutans serotype c (strain ATCC 700610 / UA159).